The primary structure comprises 458 residues: Purple acid phosphatase 23 (458 aa).

The N-terminal stretch at 1–19 is a signal peptide; that stretch reads MTLLIMITLTSISLLLAAA. N-linked (GlcNAc...) asparagine glycosylation is found at asparagine 59, asparagine 121, and asparagine 136. Aspartate 194 serves as a coordination point for Fe cation. The N-linked (GlcNAc...) asparagine glycan is linked to asparagine 200. Positions 221 and 224 each coordinate Fe cation. Residue aspartate 221 participates in Mn(2+) binding. Residue asparagine 278 participates in Mn(2+) binding. Asparagine 278 is a binding site for substrate. Asparagine 331 is a glycosylation site (N-linked (GlcNAc...) asparagine). Histidine 360 contacts Mn(2+). Catalysis depends on histidine 370, which acts as the Proton donor. A Mn(2+)-binding site is contributed by histidine 397. Position 397–399 (397–399) interacts with substrate; that stretch reads HVH. Histidine 399 is a binding site for Fe cation. Asparagine 409 and asparagine 455 each carry an N-linked (GlcNAc...) asparagine glycan.

It belongs to the metallophosphoesterase superfamily. Purple acid phosphatase family. As to quaternary structure, homodimer. Requires Fe cation as cofactor. The cofactor is Mn(2+). As to expression, specifically expressed in flowers.

It is found in the secreted. It catalyses the reaction a phosphate monoester + H2O = an alcohol + phosphate. In terms of biological role, acid phosphatase activity with ATP, ADP, dATP, pyrophosphate, polyphosphate, phosphoserine and phosphothreonine. Low or no activity with phosphotyrosine, AMP and phytate. The protein is Purple acid phosphatase 23 (PAP23) of Arabidopsis thaliana (Mouse-ear cress).